The chain runs to 346 residues: DNA-directed RNA polymerases I and III subunit RPAC1 (346 aa).

Ala2 carries the N-acetylalanine modification.

It belongs to the archaeal Rpo3/eukaryotic RPB3 RNA polymerase subunit family. Component of the RNA polymerase I and RNA polymerase III complexes consisting of at least 13 and 17 subunits, respectively. Pol I complex consists of a ten-subunit catalytic core composed of POLR1A/RPA1, POLR1B/RPA2, POLR1C/RPAC1, POLR1D/RPAC2, POLR1H/RPA12, POLR2E/RPABC1, POLR2F/RPABC2, POLR2H/RPABC3, POLR2K/RPABC4 and POLR2L/RPABC5; a mobile stalk subunit POLR1F/RPA43 protruding from the core and additional subunits homologous to general transcription factors POLR1E/RPA49 and POLR1G/RPA34. Part of Pol I pre-initiation complex (PIC), in which Pol I core assembles with RRN3 and promoter-bound UTBF and SL1/TIF-IB complex. Pol III complex consists of a ten-subunit catalytic core composed of POLR3A/RPC1, POLR3B/RPC2, POLR1C/RPAC1, POLR1D/RPAC2, POLR3K/RPC10, POLR2E/RPABC1, POLR2F/RPABC2, POLR2H/RPABC3, POLR2K/RPABC4 and POLR2L/RPABC5; a mobile stalk composed of two subunits POLR3H/RPC8 and CRCP/RPC9, protruding from the core and functioning primarily in transcription initiation; and additional subunits homologous to general transcription factors of the RNA polymerase II machinery, POLR3C/RPC3-POLR3F/RPC6-POLR3G/RPC7 heterotrimer required for transcription initiation and POLR3D/RPC4-POLR3E/RPC5 heterodimer involved in both transcription initiation and termination.

The protein resides in the nucleus. It localises to the cytoplasm. Its subcellular location is the cytosol. DNA-dependent RNA polymerase catalyzes the transcription of DNA into RNA using the four ribonucleoside triphosphates as substrates. Common component of RNA polymerases I and III which synthesize ribosomal RNA precursors and short non-coding RNAs including 5S rRNA, snRNAs, tRNAs and miRNAs, respectively. POLR1C/RPAC1 is part of the polymerase core and may function as a clamp element that moves to open and close the cleft. This chain is DNA-directed RNA polymerases I and III subunit RPAC1, found in Mus musculus (Mouse).